The following is a 125-amino-acid chain: Small ribosomal subunit protein bS6 (125 aa).

It belongs to the bacterial ribosomal protein bS6 family.

Functionally, binds together with bS18 to 16S ribosomal RNA. This Campylobacter jejuni subsp. jejuni serotype O:2 (strain ATCC 700819 / NCTC 11168) protein is Small ribosomal subunit protein bS6 (rpsF).